A 417-amino-acid polypeptide reads, in one-letter code: CinA-like protein (417 aa).

Belongs to the CinA family.

The protein is CinA-like protein of Leptospira biflexa serovar Patoc (strain Patoc 1 / Ames).